A 77-amino-acid chain; its full sequence is Conotoxin ArMSGL-0141 (77 aa).

The first 18 residues, 1 to 18 (MSGLGILVLTLLLLVYMA), serve as a signal peptide directing secretion. A propeptide spanning residues 19-44 (TSHQDAGEKQATQRDAINVRRRRSLT) is cleaved from the precursor. Cystine bridges form between Cys51–Cys63, Cys55–Cys71, and Cys62–Cys75. Phe76 carries the post-translational modification Phenylalanine amide.

This sequence belongs to the conotoxin O3 superfamily. As to expression, expressed by the venom duct.

The protein resides in the secreted. This chain is Conotoxin ArMSGL-0141, found in Conus arenatus (Sand-dusted cone).